A 1119-amino-acid chain; its full sequence is DNA-directed RNA polymerase subunit beta (1119 aa).

It belongs to the RNA polymerase beta chain family. The RNAP catalytic core consists of 2 alpha, 1 beta, 1 beta' and 1 omega subunit. When a sigma factor is associated with the core the holoenzyme is formed, which can initiate transcription.

It carries out the reaction RNA(n) + a ribonucleoside 5'-triphosphate = RNA(n+1) + diphosphate. Its function is as follows. DNA-dependent RNA polymerase catalyzes the transcription of DNA into RNA using the four ribonucleoside triphosphates as substrates. The polypeptide is DNA-directed RNA polymerase subunit beta (Thermus thermophilus (strain ATCC BAA-163 / DSM 7039 / HB27)).